The following is a 160-amino-acid chain: Transcriptional repressor NrdR (160 aa).

A zinc finger spans residues 3–34 (CPYCQCEDTQVKDSRPAEEGAVIRRRRVCSVC). The region spanning 49 to 139 (LLVLKKSGRR…VYRDFRNASD (91 aa)) is the ATP-cone domain.

The protein belongs to the NrdR family. Requires Zn(2+) as cofactor.

Negatively regulates transcription of bacterial ribonucleotide reductase nrd genes and operons by binding to NrdR-boxes. The protein is Transcriptional repressor NrdR of Bartonella bacilliformis (strain ATCC 35685 / KC583 / Herrer 020/F12,63).